The chain runs to 119 residues: Early E3 13.3 kDa protein (119 aa).

The chain is Early E3 13.3 kDa protein from Canine adenovirus serotype 1 (strain Utrecht) (CAdV-1).